We begin with the raw amino-acid sequence, 201 residues long: Proteasome subunit beta 1 (201 aa).

Residue Met1 is a propeptide, removed in mature form; by autocatalysis. Residue Thr2 is the Nucleophile of the active site.

This sequence belongs to the peptidase T1B family. In terms of assembly, the 20S proteasome core is composed of 14 alpha and 14 beta subunits that assemble into four stacked heptameric rings, resulting in a barrel-shaped structure. The two inner rings, each composed of seven catalytic beta subunits, are sandwiched by two outer rings, each composed of seven alpha subunits. The catalytic chamber with the active sites is on the inside of the barrel. Has a gated structure, the ends of the cylinder being occluded by the N-termini of the alpha-subunits. Is capped at one or both ends by the proteasome regulatory ATPase, PAN.

It localises to the cytoplasm. The catalysed reaction is Cleavage of peptide bonds with very broad specificity.. Its activity is regulated as follows. The formation of the proteasomal ATPase PAN-20S proteasome complex, via the docking of the C-termini of PAN into the intersubunit pockets in the alpha-rings, triggers opening of the gate for substrate entry. Interconversion between the open-gate and close-gate conformations leads to a dynamic regulation of the 20S proteasome proteolysis activity. Functionally, component of the proteasome core, a large protease complex with broad specificity involved in protein degradation. This chain is Proteasome subunit beta 1, found in Pyrobaculum neutrophilum (strain DSM 2338 / JCM 9278 / NBRC 100436 / V24Sta) (Thermoproteus neutrophilus).